Consider the following 370-residue polypeptide: Protein STRICTOSIDINE SYNTHASE-LIKE 9 (370 aa).

A signal peptide spans 1–26 (MPINQKIPTWFAVPAVFAVLSVISYQ). Asn-97 and Asn-171 each carry an N-linked (GlcNAc...) asparagine glycan.

This sequence belongs to the strictosidine synthase family.

The protein localises to the vacuole. This is Protein STRICTOSIDINE SYNTHASE-LIKE 9 from Arabidopsis thaliana (Mouse-ear cress).